The sequence spans 323 residues: Phosphate acyltransferase (323 aa).

The protein belongs to the PlsX family. As to quaternary structure, homodimer. Probably interacts with PlsY.

It is found in the cytoplasm. The enzyme catalyses a fatty acyl-[ACP] + phosphate = an acyl phosphate + holo-[ACP]. The protein operates within lipid metabolism; phospholipid metabolism. Its function is as follows. Catalyzes the reversible formation of acyl-phosphate (acyl-PO(4)) from acyl-[acyl-carrier-protein] (acyl-ACP). This enzyme utilizes acyl-ACP as fatty acyl donor, but not acyl-CoA. The polypeptide is Phosphate acyltransferase (Finegoldia magna (strain ATCC 29328 / DSM 20472 / WAL 2508) (Peptostreptococcus magnus)).